The primary structure comprises 236 residues: Ureidoacrylate amidohydrolase RutB (236 aa).

The Proton acceptor role is filled by Asp24. Lys133 is a catalytic residue. The active-site Nucleophile is Cys166.

Belongs to the isochorismatase family. RutB subfamily.

It carries out the reaction (Z)-3-ureidoacrylate + H2O + H(+) = (Z)-3-aminoacrylate + NH4(+) + CO2. It catalyses the reaction (Z)-3-ureidoacrylate + H2O = (Z)-3-aminoacrylate + carbamate + H(+). The catalysed reaction is (Z)-2-methylureidoacrylate + H2O + H(+) = (Z)-2-methylaminoacrylate + NH4(+) + CO2. Hydrolyzes ureidoacrylate to form aminoacrylate and carbamate. The carbamate hydrolyzes spontaneously, thereby releasing one of the nitrogen atoms of the pyrimidine ring as ammonia and one of its carbon atoms as CO2. This Klebsiella pneumoniae subsp. pneumoniae (strain ATCC 700721 / MGH 78578) protein is Ureidoacrylate amidohydrolase RutB.